The chain runs to 787 residues: Phenylalanine--tRNA ligase beta subunit (787 aa).

A tRNA-binding domain is found at 39–149 (APAFSGVVVA…EDAPVGTNIR (111 aa)). The B5 domain maps to 400–475 (PEAKQVGLRL…RVYGYENIPD (76 aa)). 4 residues coordinate Mg(2+): aspartate 453, aspartate 459, glutamate 462, and glutamate 463. The region spanning 694-786 (SKFQPVRRDL…VATEAGARLR (93 aa)) is the FDX-ACB domain.

The protein belongs to the phenylalanyl-tRNA synthetase beta subunit family. Type 1 subfamily. As to quaternary structure, tetramer of two alpha and two beta subunits. The cofactor is Mg(2+).

The protein resides in the cytoplasm. The enzyme catalyses tRNA(Phe) + L-phenylalanine + ATP = L-phenylalanyl-tRNA(Phe) + AMP + diphosphate + H(+). The chain is Phenylalanine--tRNA ligase beta subunit from Neisseria gonorrhoeae (strain ATCC 700825 / FA 1090).